Here is a 158-residue protein sequence, read N- to C-terminus: Cyclic pyranopterin monophosphate synthase (158 aa).

Substrate is bound by residues L75–H77 and M113–E114. Residue D128 is part of the active site.

This sequence belongs to the MoaC family. In terms of assembly, homohexamer; trimer of dimers.

The enzyme catalyses (8S)-3',8-cyclo-7,8-dihydroguanosine 5'-triphosphate = cyclic pyranopterin phosphate + diphosphate. The protein operates within cofactor biosynthesis; molybdopterin biosynthesis. Catalyzes the conversion of (8S)-3',8-cyclo-7,8-dihydroguanosine 5'-triphosphate to cyclic pyranopterin monophosphate (cPMP). The polypeptide is Cyclic pyranopterin monophosphate synthase (Acidiphilium cryptum (strain JF-5)).